The sequence spans 437 residues: Glutamyl-tRNA reductase (437 aa).

Residues 49 to 52 (TCNR), Ser109, 114 to 116 (ETQ), and Gln120 each bind substrate. Cys50 acts as the Nucleophile in catalysis. 189-194 (GAGEMS) is a binding site for NADP(+).

This sequence belongs to the glutamyl-tRNA reductase family. Homodimer.

The enzyme catalyses (S)-4-amino-5-oxopentanoate + tRNA(Glu) + NADP(+) = L-glutamyl-tRNA(Glu) + NADPH + H(+). Its pathway is porphyrin-containing compound metabolism; protoporphyrin-IX biosynthesis; 5-aminolevulinate from L-glutamyl-tRNA(Glu): step 1/2. Functionally, catalyzes the NADPH-dependent reduction of glutamyl-tRNA(Glu) to glutamate 1-semialdehyde (GSA). The protein is Glutamyl-tRNA reductase of Listeria welshimeri serovar 6b (strain ATCC 35897 / DSM 20650 / CCUG 15529 / CIP 8149 / NCTC 11857 / SLCC 5334 / V8).